The following is a 514-amino-acid chain: Adenylosuccinate synthetase 1, chloroplastic (514 aa).

Residues 1-73 constitute a chloroplast transit peptide; the sequence is MAMAAAAAVA…AQAIERESVK (73 aa). GTP-binding positions include 100–106 and 128–130; these read GDEGKGK and GHT. The active-site Proton acceptor is the Asp-101. The Mg(2+) site is built by Asp-101 and Gly-128. Residues 101–104, 126–129, Thr-218, Arg-232, Gln-312, Thr-327, and Arg-391 contribute to the IMP site; these read DEGK and NAGH. The active-site Proton donor is His-129. Position 387–393 (387–393) interacts with substrate; that stretch reads TTTGRPR. Residues Arg-393, 419 to 421, and 502 to 504 contribute to the GTP site; these read KLD and GVG.

The protein belongs to the adenylosuccinate synthetase family. Homodimer. Mg(2+) serves as cofactor.

The protein resides in the plastid. It is found in the chloroplast. The catalysed reaction is IMP + L-aspartate + GTP = N(6)-(1,2-dicarboxyethyl)-AMP + GDP + phosphate + 2 H(+). It participates in purine metabolism; AMP biosynthesis via de novo pathway; AMP from IMP: step 1/2. Functionally, plays an important role in the de novo pathway and in the salvage pathway of purine nucleotide biosynthesis. Catalyzes the first committed step in the biosynthesis of AMP from IMP. In Physcomitrium patens (Spreading-leaved earth moss), this protein is Adenylosuccinate synthetase 1, chloroplastic.